The following is a 212-amino-acid chain: Eggshell protein 1 (212 aa).

A signal peptide spans 1–27 (MKSSLTLLFLAAIGYTIAYPPPSDYDS). The interval 155–212 (RKNGHGKGGKGGNGGGGGKGGGKGGGNGKGNGKGGGGKNGGGKGGNGGKGGSYAPSYY) is disordered. Over residues 163–205 (GKGGNGGGGGKGGGKGGGNGKGNGKGGGGKNGGGKGGNGGKGG) the composition is skewed to gly residues.

Detected only in mature female parasites.

In Schistosoma japonicum (Blood fluke), this protein is Eggshell protein 1 (ESG-1).